Reading from the N-terminus, the 585-residue chain is MLTDMDISSRASLKNITEIGVDLGLLPEEMMLFGHTKAKVELSVLQRLAGQRKGKLIIVTAVTPTPHGEGKTVTSIGLTQSLNAIGQKACACIRQPSMGPVFGVKGGAAGGGYAQVVPMQEMNLHLTGDIHAVSSAHNLGAAAIAARLFHEARLGKTEFEAQSGQAFLDIAPNEIRWHRVVDHNDRCLRQIHVGLGDNNGPEYGSSFDITAASELMAILALSHDLADMRVRIGRLVLALNTQGQVITAEDLGVAGAMTAIMADAIKPTLMQTLNGSPCLIHSGPFANIAHGNSSIIADDIALRLADFVVTEGGFGSDMGFEKFCNIKVRQSGQAPAAAVLVTTLKALKANSGLATEVDSNVSNIHVPKINAANINAPDQARLEAGFANLNWHINNVARYGIPVVVAINRFATDSDAELQWLMEAVNASAAFGCEISDAFSQGEAGAIALAQTVVRAAEIESQFKLLYPDEASLEAKLSTLAEVGYGAAGVSLSIEAKQQAQQLTALGYGHLPLCMAKTPLSISHDPSLKGVPKDFVVPVRELVLHAGAGFITALVGNVMTMPGLGLKPGYLKIDIDAKGEIVGLG.

Position 65 to 72 (threonine 65 to threonine 72) interacts with ATP.

Belongs to the formate--tetrahydrofolate ligase family.

The enzyme catalyses (6S)-5,6,7,8-tetrahydrofolate + formate + ATP = (6R)-10-formyltetrahydrofolate + ADP + phosphate. The protein operates within one-carbon metabolism; tetrahydrofolate interconversion. This is Formate--tetrahydrofolate ligase from Shewanella baltica (strain OS195).